The chain runs to 771 residues: DNA helicase/primase complex-associated protein (771 aa).

Belongs to the herpesviridae HEPA family. In terms of assembly, associates with the primase and the helicase to form the helicase-primase complex. Interacts with the origin-binding protein. Interacts with the polymerase catalytic subunit.

It is found in the host nucleus. Component of the helicase/primase complex. Unwinds the DNA at the replication forks and generates single-stranded DNA for both leading and lagging strand synthesis. The primase synthesizes short RNA primers on the lagging strand that the polymerase presumably elongates using dNTPs. The primase-associated factor has no known catalytic activity in the complex and may serve to facilitate the formation of the replisome by directly interacting with the origin-binding protein and the polymerase. This is DNA helicase/primase complex-associated protein from Varicella-zoster virus (strain Oka vaccine) (HHV-3).